Here is a 146-residue protein sequence, read N- to C-terminus: MSTPFWQSKSLEHMSEEEWESLCDGCGKCCLHKLMDEDTDEIYYTNVACSWLNSKTCSCKDYPNRFTSGEECTKLTREDIDDFTWLPHTCAYRLLAENQPLPEWHPLITGSKSAMHAAGESVRNKVVYEIDVVDWEDHILNHPNRP.

The protein belongs to the UPF0260 family.

In Vibrio parahaemolyticus serotype O3:K6 (strain RIMD 2210633), this protein is UPF0260 protein VP2169.